A 201-amino-acid chain; its full sequence is Recombination protein RecR (201 aa).

Residues 56 to 71 form a C4-type zinc finger; the sequence is CKICFNVSSDEVCQYC. The region spanning 79-174 is the Toprim domain; sequence SMICVVEESK…TVSRLASGLP (96 aa).

It belongs to the RecR family.

May play a role in DNA repair. It seems to be involved in an RecBC-independent recombinational process of DNA repair. It may act with RecF and RecO. The chain is Recombination protein RecR from Cutibacterium acnes (strain DSM 16379 / KPA171202) (Propionibacterium acnes).